A 237-amino-acid chain; its full sequence is Phosphoribosylaminoimidazole-succinocarboxamide synthase (237 aa).

Belongs to the SAICAR synthetase family.

It catalyses the reaction 5-amino-1-(5-phospho-D-ribosyl)imidazole-4-carboxylate + L-aspartate + ATP = (2S)-2-[5-amino-1-(5-phospho-beta-D-ribosyl)imidazole-4-carboxamido]succinate + ADP + phosphate + 2 H(+). It participates in purine metabolism; IMP biosynthesis via de novo pathway; 5-amino-1-(5-phospho-D-ribosyl)imidazole-4-carboxamide from 5-amino-1-(5-phospho-D-ribosyl)imidazole-4-carboxylate: step 1/2. The chain is Phosphoribosylaminoimidazole-succinocarboxamide synthase from Cronobacter sakazakii (strain ATCC BAA-894) (Enterobacter sakazakii).